Reading from the N-terminus, the 379-residue chain is Cyclic di-GMP phosphodiesterase PdeB (379 aa).

The region spanning 114–310 is the HD-GYP domain; it reads FYKKQKKIFI…PLDFIVELND (197 aa).

Mn(2+) serves as cofactor.

The enzyme catalyses 3',3'-c-di-GMP + 2 H2O = 2 GMP + 2 H(+). Phosphodiesterase (PDE) that catalyzes the hydrolysis of cyclic diguanylate (c-di-GMP) to GMP. This Borreliella burgdorferi (strain ATCC 35210 / DSM 4680 / CIP 102532 / B31) (Borrelia burgdorferi) protein is Cyclic di-GMP phosphodiesterase PdeB.